Here is a 246-residue protein sequence, read N- to C-terminus: uncharacterized protein (246 aa).

Val10–Val34 is a binding site for NADP(+). Residue Ser140 participates in substrate binding. Catalysis depends on Tyr153, which acts as the Proton acceptor.

It belongs to the short-chain dehydrogenases/reductases (SDR) family.

This is an uncharacterized protein from Staphylococcus saprophyticus subsp. saprophyticus (strain ATCC 15305 / DSM 20229 / NCIMB 8711 / NCTC 7292 / S-41).